We begin with the raw amino-acid sequence, 86 residues long: Neurotoxin 3FTx-LT (86 aa).

Positions 1–21 (MKTLLLTLVVVTIVCLDLGYT) are cleaved as a signal peptide. Intrachain disulfides connect Cys-24–Cys-45, Cys-27–Cys-32, Cys-38–Cys-63, Cys-67–Cys-78, and Cys-79–Cys-84.

Expressed by the venom gland.

It localises to the secreted. In terms of biological role, binds with low affinity to muscular (alpha-1-beta-1-delta-epsilon/CHRNA1-CHRNB1-CHRND-CHRNE) and very low affinity to neuronal (alpha-7/CHRNA7) nicotinic acetylcholine receptor (nAChR). This Bungarus fasciatus (Banded krait) protein is Neurotoxin 3FTx-LT.